The following is a 435-amino-acid chain: Xylose isomerase (435 aa).

Active-site residues include His-100 and Asp-103. Positions 231, 267, 270, 295, 306, 308, and 338 each coordinate Mg(2+).

Belongs to the xylose isomerase family. As to quaternary structure, homotetramer. It depends on Mg(2+) as a cofactor.

It is found in the cytoplasm. The enzyme catalyses alpha-D-xylose = alpha-D-xylulofuranose. In Brucella canis (strain ATCC 23365 / NCTC 10854 / RM-666), this protein is Xylose isomerase.